Here is a 358-residue protein sequence, read N- to C-terminus: Phenylalanine--tRNA ligase alpha subunit (358 aa).

Glutamate 279 serves as a coordination point for Mg(2+).

Belongs to the class-II aminoacyl-tRNA synthetase family. Phe-tRNA synthetase alpha subunit type 1 subfamily. As to quaternary structure, tetramer of two alpha and two beta subunits. Mg(2+) serves as cofactor.

It is found in the cytoplasm. The enzyme catalyses tRNA(Phe) + L-phenylalanine + ATP = L-phenylalanyl-tRNA(Phe) + AMP + diphosphate + H(+). The sequence is that of Phenylalanine--tRNA ligase alpha subunit from Variovorax paradoxus (strain S110).